The sequence spans 189 residues: Putative manganese efflux pump MntP (189 aa).

Helical transmembrane passes span 3–23 (LSAT…ASIG), 41–61 (LIFG…GLFA), 65–85 (IMEW…CRMI), 104–124 (FWVL…IGVG), 132–152 (IVHT…LGML), and 167–187 (IIGG…HMHL).

It belongs to the MntP (TC 9.B.29) family.

It localises to the cell inner membrane. Its function is as follows. Probably functions as a manganese efflux pump. This Yersinia pseudotuberculosis serotype O:1b (strain IP 31758) protein is Putative manganese efflux pump MntP.